Here is a 75-residue protein sequence, read N- to C-terminus: Small ribosomal subunit protein bS18 (75 aa).

It belongs to the bacterial ribosomal protein bS18 family. As to quaternary structure, part of the 30S ribosomal subunit. Forms a tight heterodimer with protein bS6.

In terms of biological role, binds as a heterodimer with protein bS6 to the central domain of the 16S rRNA, where it helps stabilize the platform of the 30S subunit. The protein is Small ribosomal subunit protein bS18 of Methylobacillus flagellatus (strain ATCC 51484 / DSM 6875 / VKM B-1610 / KT).